Here is a 203-residue protein sequence, read N- to C-terminus: Dephospho-CoA kinase (203 aa).

Positions 5-203 (IVGLTGGIAS…VVYRVAASEH (199 aa)) constitute a DPCK domain. 13 to 18 (ASGKSA) serves as a coordination point for ATP.

Belongs to the CoaE family.

It is found in the cytoplasm. The enzyme catalyses 3'-dephospho-CoA + ATP = ADP + CoA + H(+). It functions in the pathway cofactor biosynthesis; coenzyme A biosynthesis; CoA from (R)-pantothenate: step 5/5. Its function is as follows. Catalyzes the phosphorylation of the 3'-hydroxyl group of dephosphocoenzyme A to form coenzyme A. This chain is Dephospho-CoA kinase, found in Xanthomonas euvesicatoria pv. vesicatoria (strain 85-10) (Xanthomonas campestris pv. vesicatoria).